The following is a 435-amino-acid chain: GTPase Obg (435 aa).

Positions 1 to 158 (MFIDRAKIYV…RWLYLELKLL (158 aa)) constitute an Obg domain. Residues 159–328 (ADVGLVGLPN…LLELMEKYVR (170 aa)) form the OBG-type G domain. GTP contacts are provided by residues 165–172 (GLPNAGKS), 190–194 (FTTKT), 211–214 (DIPG), 280–283 (NKID), and 309–311 (SAK). The Mg(2+) site is built by Ser172 and Thr192. In terms of domain architecture, OCT spans 343-426 (IQETKEGRVE…IGDYIFKYNA (84 aa)).

This sequence belongs to the TRAFAC class OBG-HflX-like GTPase superfamily. OBG GTPase family. Monomer. It depends on Mg(2+) as a cofactor.

The protein localises to the cytoplasm. Its function is as follows. An essential GTPase which binds GTP, GDP and possibly (p)ppGpp with moderate affinity, with high nucleotide exchange rates and a fairly low GTP hydrolysis rate. Plays a role in control of the cell cycle, stress response, ribosome biogenesis and in those bacteria that undergo differentiation, in morphogenesis control. This Dictyoglomus thermophilum (strain ATCC 35947 / DSM 3960 / H-6-12) protein is GTPase Obg.